The primary structure comprises 499 residues: MELSEPIVENGETEMSPEESWEHKEEISEAEPGGGSLGDGRPPEESAHEMMEEEEEIPKPKSVVAPPGAPKKEHVNVVFIGHVDAGKSTIGGQIMYLTGMVDKRTLEKYEREAKEKNRETWYLSWALDTNQEERDKGKTVEVGRAYFETEKKHFTILDAPGHKSFVPNMIGGASQADLAVLVISARKGEFETGFEKGGQTREHAMLAKTAGVKHLIVLINKMDDPTVNWSNERYEECKEKLVPFLKKVGFNPKKDIHFMPCSGLTGANLKEQSDFCPWYIGLPFIPYLDNLPNFNRSVDGPIRLPIVDKYKDMGTVVLGKLESGSICKGQQLVMMPNKHNVEVLGILSDDVETDTVAPGENLKIRLKGIEEEEILPGFILCDPNNLCHSGRTFDAQIVIIEHKSIICPGYNAVLHIHTCIEEVEITALICLVDKKSGEKSKTRPRFVKQDQVCIARLRTAGTICLETFKDFPQMGRFTLRDEGKTIAIGKVLKLVPEKD.

The tract at residues 1–69 is disordered; sequence MELSEPIVEN…PKSVVAPPGA (69 aa). Positions 41-50 are enriched in basic and acidic residues; the sequence is RPPEESAHEM. Residues 72-298 form the tr-type G domain; sequence KEHVNVVFIG…DNLPNFNRSV (227 aa). Residues 81 to 88 are G1; sequence GHVDAGKS. 84–89 lines the GTP pocket; it reads DAGKST. The interval 137 to 141 is G2; sequence GKTVE. The tract at residues 158–161 is G3; the sequence is DAPG. GTP contacts are provided by residues 220 to 223 and 262 to 264; these read NKMD and SGL. Residues 220-223 are G4; sequence NKMD. The G5 stretch occupies residues 262–264; that stretch reads SGL.

Belongs to the TRAFAC class translation factor GTPase superfamily. Classic translation factor GTPase family. ERF3 subfamily. As to quaternary structure, component of the eRF1-eRF3-GTP ternary complex, composed of ETF1/ERF1 and ERF3 (GSPT1/ERF3A or GSPT2/ERF3B) and GTP. Component of the transient SURF (SMG1-UPF1-eRF1-eRF3) complex. The ETF1-GSPT1 complex interacts with JMJD4. Interacts with PABPC1. Interacts with SHFL.

The catalysed reaction is GTP + H2O = GDP + phosphate + H(+). In terms of biological role, GTPase component of the eRF1-eRF3-GTP ternary complex, a ternary complex that mediates translation termination in response to the termination codons UAA, UAG and UGA. GSPT1/ERF3A mediates ETF1/ERF1 delivery to stop codons: The eRF1-eRF3-GTP complex binds to a stop codon in the ribosomal A-site. GTP hydrolysis by GSPT1/ERF3A induces a conformational change that leads to its dissociation, permitting ETF1/ERF1 to accommodate fully in the A-site. Component of the transient SURF complex which recruits UPF1 to stalled ribosomes in the context of nonsense-mediated decay (NMD) of mRNAs containing premature stop codons. Required for SHFL-mediated translation termination which inhibits programmed ribosomal frameshifting (-1PRF) of mRNA from viruses and cellular genes. The chain is Eukaryotic peptide chain release factor GTP-binding subunit ERF3A (GSPT1) from Homo sapiens (Human).